The following is a 297-amino-acid chain: tRNA dimethylallyltransferase (297 aa).

10 to 17 lines the ATP pocket; sequence GITASGKS. 12–17 provides a ligand contact to substrate; that stretch reads TASGKS. An interaction with substrate tRNA region spans residues 36 to 39; the sequence is DSKQ.

Belongs to the IPP transferase family. Monomer. Mg(2+) is required as a cofactor.

It carries out the reaction adenosine(37) in tRNA + dimethylallyl diphosphate = N(6)-dimethylallyladenosine(37) in tRNA + diphosphate. Functionally, catalyzes the transfer of a dimethylallyl group onto the adenine at position 37 in tRNAs that read codons beginning with uridine, leading to the formation of N6-(dimethylallyl)adenosine (i(6)A). The sequence is that of tRNA dimethylallyltransferase from Wolbachia pipientis subsp. Culex pipiens (strain wPip).